The sequence spans 93 residues: Large ribosomal subunit protein uL23cz/uL23cy (93 aa).

It belongs to the universal ribosomal protein uL23 family. In terms of assembly, part of the 50S ribosomal subunit.

It is found in the plastid. Its subcellular location is the chloroplast. Functionally, binds to 23S rRNA. The sequence is that of Large ribosomal subunit protein uL23cz/uL23cy (rpl23-A) from Gossypium barbadense (Sea Island cotton).